We begin with the raw amino-acid sequence, 258 residues long: Chemokine-binding protein (258 aa).

The signal sequence occupies residues 1–17 (MKQYIVLACMCLAAAAM). A disordered region spans residues 65–93 (TEITESESDPDPEVESEDDSTSVEDVDPP). A compositionally biased stretch (acidic residues) spans 68–91 (TESESDPDPEVESEDDSTSVEDVD).

This sequence belongs to the orthopoxvirus OPG001 family. As to quaternary structure, binds to host CC chemokines, such as RANTES/CCL5, MIP-1alpha/CCL3, MCP-1/CCL2 and eotaxin.

It is found in the secreted. In terms of biological role, inhibits host immune defense by binding to host chemokines. Binds host CC chemokines (beta chemokines) such as RANTES with high affinity, but not CXC or C chemokines (alpha and gamma chemokines). This is Chemokine-binding protein (OPG001) from Homo sapiens (Human).